The primary structure comprises 208 residues: FMN-dependent NADH:quinone oxidoreductase (208 aa).

Residues His-10, 17–19 (SRS), 104–107 (MWNL), 148–153 (SNGGFY), and Asp-184 contribute to the FMN site.

This sequence belongs to the azoreductase type 1 family. As to quaternary structure, homodimer. The cofactor is FMN.

The enzyme catalyses 2 a quinone + NADH + H(+) = 2 a 1,4-benzosemiquinone + NAD(+). The catalysed reaction is N,N-dimethyl-1,4-phenylenediamine + anthranilate + 2 NAD(+) = 2-(4-dimethylaminophenyl)diazenylbenzoate + 2 NADH + 2 H(+). Functionally, quinone reductase that provides resistance to thiol-specific stress caused by electrophilic quinones. Also exhibits azoreductase activity. Catalyzes the reductive cleavage of the azo bond in aromatic azo compounds to the corresponding amines. Requires NADH, but not NADPH, as an electron donor for its activity. The enzyme can also reduce a wide range of sulfonated azo dyes. The substrate preference order is methyl Red &gt; Orange II &gt; Ponceau BS &gt; Ponceau S &gt; Orange G &gt; Amaranth. The protein is FMN-dependent NADH:quinone oxidoreductase of Enterococcus faecalis (strain ATCC 700802 / V583).